A 130-amino-acid chain; its full sequence is Small ribosomal subunit protein uS9 (130 aa).

Belongs to the universal ribosomal protein uS9 family.

The polypeptide is Small ribosomal subunit protein uS9 (Serratia proteamaculans (strain 568)).